Consider the following 525-residue polypeptide: Ribosomal protein S6 kinase beta-1 (525 aa).

The short motif at 28-32 (FDIDL) is the TOS motif element. A disordered region spans residues 28 to 54 (FDIDLDQPEDAGSEDELEEGGQLNESM). Over residues 30–46 (IDLDQPEDAGSEDELEE) the composition is skewed to acidic residues. One can recognise a Protein kinase domain in the interval 91–352 (FELLRVLGKG…AGEVQAHPFF (262 aa)). ATP contacts are provided by residues 97-105 (LGKGGYGKV) and K123. D218 (proton acceptor) is an active-site residue. T252 carries the post-translational modification Phosphothreonine; by PDPK1. In terms of domain architecture, AGC-kinase C-terminal spans 353–423 (RHINWEELLA…VAPSVLESVK (71 aa)). Residues 380–399 (SQFDSKFTRQTPVDSPDDST) form a disordered region. Polar residues predominate over residues 381 to 399 (QFDSKFTRQTPVDSPDDST). S394 carries the phosphoserine modification. Residue T412 is modified to Phosphothreonine; by MTOR, NEK6 and NEK7. An autoinhibitory domain region spans residues 424-525 (EKFSFEPKIR…KRPEHLRMNL (102 aa)). Residues S434 and S441 each carry the phosphoserine modification. The residue at position 444 (T444) is a Phosphothreonine. 2 positions are modified to phosphoserine: S447 and S452. The interval 486 to 509 (VTTSGEASAPLPIRQPNSGPYKKQ) is disordered. K516 is modified (N6-acetyllysine).

This sequence belongs to the protein kinase superfamily. AGC Ser/Thr protein kinase family. S6 kinase subfamily. In terms of assembly, interacts with PPP1R9A/neurabin-1. Interacts with RPTOR. Interacts with IRS1. Interacts with EIF3B and EIF3C. Interacts with POLDIP3. Interacts with TRAF4. Interacts (via N-terminus) with IER5. In terms of processing, dephosphorylation by PPP1CC at Thr-412 in mitochondrion. Phosphorylation at Thr-412 is regulated by mTORC1. The phosphorylation at this site is maintained by an agonist-dependent autophosphorylation mechanism. Activated by phosphorylation at Thr-252 by PDPK1. In terms of tissue distribution, brain.

Its subcellular location is the cytoplasm. It localises to the synapse. The protein localises to the synaptosome. It is found in the mitochondrion outer membrane. The protein resides in the mitochondrion. The enzyme catalyses L-seryl-[protein] + ATP = O-phospho-L-seryl-[protein] + ADP + H(+). It catalyses the reaction L-threonyl-[protein] + ATP = O-phospho-L-threonyl-[protein] + ADP + H(+). Activation requires multiple phosphorylation events on serine/threonine residues. Activation appears to be first mediated by phosphorylation of multiple sites in the autoinhibitory domain, which facilitates phosphorylation at Thr-412, disrupting the autoinhibitory mechanism and allowing phosphorylation of Thr-252 by PDPK1. The active conformation of the kinase is believed to be stabilized by a mechanism involving three conserved phosphorylation sites located in the kinase domain activation loop (Thr-252) and in the AGC-kinase C-terminal domain (Ser-394 in the middle of the tail/linker region and Thr-412 within a hydrophobic motif at its end). Activated by mTORC1; isoform Alpha I and isoform Alpha II are sensitive to rapamycin, which inhibits activating phosphorylation at Thr-412. Activated by PDPK1. In terms of biological role, serine/threonine-protein kinase that acts downstream of mTOR signaling in response to growth factors and nutrients to promote cell proliferation, cell growth and cell cycle progression. Regulates protein synthesis through phosphorylation of EIF4B, RPS6 and EEF2K, and contributes to cell survival by repressing the pro-apoptotic function of BAD. Under conditions of nutrient depletion, the inactive form associates with the EIF3 translation initiation complex. Upon mitogenic stimulation, phosphorylation by the mechanistic target of rapamycin complex 1 (mTORC1) leads to dissociation from the EIF3 complex and activation. The active form then phosphorylates and activates several substrates in the pre-initiation complex, including the EIF2B complex and the cap-binding complex component EIF4B. Also controls translation initiation by phosphorylating a negative regulator of EIF4A, PDCD4, targeting it for ubiquitination and subsequent proteolysis. Promotes initiation of the pioneer round of protein synthesis by phosphorylating POLDIP3/SKAR. In response to IGF1, activates translation elongation by phosphorylating EEF2 kinase (EEF2K), which leads to its inhibition and thus activation of EEF2. Also plays a role in feedback regulation of mTORC2 by mTORC1 by phosphorylating MAPKAP1/SIN1, MTOR and RICTOR, resulting in the inhibition of mTORC2 and AKT1 signaling. Also involved in feedback regulation of mTORC1 and mTORC2 by phosphorylating DEPTOR. Mediates cell survival by phosphorylating the pro-apoptotic protein BAD and suppressing its pro-apoptotic function. Phosphorylates mitochondrial URI1 leading to dissociation of a URI1-PPP1CC complex. The free mitochondrial PPP1CC can then dephosphorylate RPS6KB1 at Thr-412, which is proposed to be a negative feedback mechanism for the RPS6KB1 anti-apoptotic function. Mediates TNF-alpha-induced insulin resistance by phosphorylating IRS1 at multiple serine residues, resulting in accelerated degradation of IRS1. In cells lacking functional TSC1-2 complex, constitutively phosphorylates and inhibits GSK3B. May be involved in cytoskeletal rearrangement through binding to neurabin. Phosphorylates and activates the pyrimidine biosynthesis enzyme CAD, downstream of MTOR. Following activation by mTORC1, phosphorylates EPRS and thereby plays a key role in fatty acid uptake by adipocytes and also most probably in interferon-gamma-induced translation inhibition. This chain is Ribosomal protein S6 kinase beta-1 (Rps6kb1), found in Rattus norvegicus (Rat).